The chain runs to 72 residues: Translation initiation factor IF-1 (72 aa).

Residues 1–72 enclose the S1-like domain; the sequence is MSKEDHIEME…SKARITFRHR (72 aa).

It belongs to the IF-1 family. As to quaternary structure, component of the 30S ribosomal translation pre-initiation complex which assembles on the 30S ribosome in the order IF-2 and IF-3, IF-1 and N-formylmethionyl-tRNA(fMet); mRNA recruitment can occur at any time during PIC assembly.

The protein resides in the cytoplasm. One of the essential components for the initiation of protein synthesis. Stabilizes the binding of IF-2 and IF-3 on the 30S subunit to which N-formylmethionyl-tRNA(fMet) subsequently binds. Helps modulate mRNA selection, yielding the 30S pre-initiation complex (PIC). Upon addition of the 50S ribosomal subunit IF-1, IF-2 and IF-3 are released leaving the mature 70S translation initiation complex. The protein is Translation initiation factor IF-1 of Methylococcus capsulatus (strain ATCC 33009 / NCIMB 11132 / Bath).